Consider the following 299-residue polypeptide: 33 kDa chaperonin (299 aa).

2 cysteine pairs are disulfide-bonded: cysteine 240-cysteine 242 and cysteine 273-cysteine 276.

Belongs to the HSP33 family. In terms of processing, under oxidizing conditions two disulfide bonds are formed involving the reactive cysteines. Under reducing conditions zinc is bound to the reactive cysteines and the protein is inactive.

Its subcellular location is the cytoplasm. Functionally, redox regulated molecular chaperone. Protects both thermally unfolding and oxidatively damaged proteins from irreversible aggregation. Plays an important role in the bacterial defense system toward oxidative stress. In Thermosynechococcus vestitus (strain NIES-2133 / IAM M-273 / BP-1), this protein is 33 kDa chaperonin.